A 213-amino-acid polypeptide reads, in one-letter code: MAQRQKPMALRPAARILFLPPLNRPSPFNPWLARLLPPPPPGKLTKLTPGSSKILSSAPLVSFPSRLETPQVKYCLIWPSGQGLTPTLPTSQPCTPAGLGTWRFSWSSPAMPLLLARWLLPLYHPIFPRGHSLLPRSHASHMSCVMCAPWSPFNSLFLMCVESFGMLPRIKRNLCAWFACCTRHSAQTARVMSLLWSLAAFFLSRRLISILST.

Its subcellular location is the host mitochondrion. In terms of biological role, plays a role in antagonizing the host innate immune response. In Norovirus (isolate Mouse/NoV/United States/MNV1/2002/GV) (MNV-1), this protein is Virulence factor 1.